The sequence spans 497 residues: Aldehyde dehydrogenase (497 aa).

241 to 246 (GSTVVG) contacts NAD(+). E264 serves as the catalytic Proton acceptor. Residue C298 is the Nucleophile of the active site.

This sequence belongs to the aldehyde dehydrogenase family.

Its subcellular location is the cytoplasm. The enzyme catalyses an aldehyde + NAD(+) + H2O = a carboxylate + NADH + 2 H(+). The protein operates within alcohol metabolism; ethanol degradation; acetate from ethanol: step 2/2. The protein is Aldehyde dehydrogenase (ALTA10) of Alternaria alternata (Alternaria rot fungus).